We begin with the raw amino-acid sequence, 176 residues long: Endoribonuclease YbeY (176 aa).

Zn(2+) is bound by residues H138, H142, and H148.

Belongs to the endoribonuclease YbeY family. Requires Zn(2+) as cofactor.

It is found in the cytoplasm. Single strand-specific metallo-endoribonuclease involved in late-stage 70S ribosome quality control and in maturation of the 3' terminus of the 16S rRNA. The chain is Endoribonuclease YbeY from Trichormus variabilis (strain ATCC 29413 / PCC 7937) (Anabaena variabilis).